A 1026-amino-acid chain; its full sequence is MSLPAETDMEDTKPSVVMVDNGDQAQFRFAEFSKNELALDEKSCKEAMDLFGETKHLLVANVLSMGNGTTEEAERNWFAFILYSIKKLAQKNEEIQKDEIENTGLTLCRILRAAKLNIAEFFKELPQFVVKAGPILSNLYGPDWENKLEAKEMHANTIHLKILSKYYKRVFEEFFVSTDANVENNSSVTNRVSEYHRFGWLLFLALRVHAFSRFKDLVTCTNGLISILAILIIHVPARFRSFNIHDSSRFVKKSANGVDLLASLCNLYNTSEDELRKTIEQANNLVADILKKKPCLASECETENLENFDRDGLTYFKDLMEESSLPSSLSVLENDYDHMTRNNGELDERLFINEDDSLLASGSLSRGSVSAGGVKRKIDLMTSPTKMITSPLSPHRSPASHANGIPSSATPMIAATPVSTAMTTAKWLRTVISPLPSKPSQELERFLTSCDKDITSDVIRRAQIILQAIFPSSPLGDRCVTGSLQSANLMDNIWAEQRRLEALKLYYRVLATMCRAEAQILGNNLTSLLTNERFHRCMLACSAELVLATHKTVTMLFPAVLERTGITAFDLSKVIESFIRYEESLPRELRRHLNSLEERLLESLVWEKGSSMYNSLAVARPALSVEINRLGLLAEPMRSLDEIAMDINFSCGGLPPVPSLPKPEPMSAQNGDPRSPKRPCTEHRNVLAERNSFTSPVKDRLLHLSNLKSKLLPPPLQSAFASPTKPNPGGGGETCAETGISVFFSKIVKLGAVRISGMVERLQLSQQIRENVYCLFQRILNQWTSLFFNRHIDQIILCCFYGVAKISQLNLTFREIIYNYRKQPQCKPEVFRSVFVDWSSARRNGSCKQRTGQEHIDIISFYNEVFIPSVKPLLVEIGPGGATTRNDRIPEANNKNDGHLAQCPGSPRISPFPSLPDMSPKKVSATHNVYVSPLRSSKMDALISHSSKSYYACVGESTHAYQSPSKDLTAINNRLNGNRKVRGPLNFDDVDVGLVSDSMVANSLYLQNGSSASSSGAPLKSEQPDS.

Positions 416–616 (TPVSTAMTTA…EKGSSMYNSL (201 aa)) are domain A. Positions 416–872 (TPVSTAMTTA…NEVFIPSVKP (457 aa)) are pocket. Residues 617–737 (AVARPALSVE…PGGGGETCAE (121 aa)) are spacer. Positions 656–680 (PVPSLPKPEPMSAQNGDPRSPKRPC) are disordered. The interval 738-872 (TGISVFFSKI…NEVFIPSVKP (135 aa)) is domain B. The interval 1007 to 1026 (QNGSSASSSGAPLKSEQPDS) is disordered.

It belongs to the retinoblastoma protein (RB) family.

It localises to the nucleus. Its function is as follows. Regulator of biological processes that recruits a histone deacetylase to control gene transcription. May play a role in the entry into mitosis, negatively regulating the cell proliferation. Formation of stable complexes with geminiviridae replication-associated proteins may create a cellular environment which favors viral DNA replication. The chain is Retinoblastoma-related protein 1 (RBR1) from Pisum sativum (Garden pea).